Here is a 207-residue protein sequence, read N- to C-terminus: Glutathione S-transferase 3 (207 aa).

The region spanning 2 to 79 (VHYKLTYFNA…YLARKFGFVG (78 aa)) is the GST N-terminal domain. Glutathione contacts are provided by residues tyrosine 8, lysine 43, 49–51 (GQV), and 63–64 (QS). Residues 81-207 (TAEEELQADE…WLAKRPETRF (127 aa)) form the GST C-terminal domain.

It belongs to the GST superfamily. Sigma family.

The enzyme catalyses RX + glutathione = an S-substituted glutathione + a halide anion + H(+). Its function is as follows. Conjugation of reduced glutathione to a wide number of exogenous and endogenous hydrophobic electrophiles. This chain is Glutathione S-transferase 3 (gst-3), found in Caenorhabditis elegans.